Here is a 657-residue protein sequence, read N- to C-terminus: MAKETFYITTPIYYPSGNLHIGHAYSTVAGDVIARYKRMQGYDVRYLTGTDEHGQKIQEKAQKAGKTEIEYLDEMIAGIKQLWAKLEISNDDFIRTTEERHKHVVEQVFERLLKQGDIYLGEYEGWYSVPDETYYTESQLVDPQYENGKIIGGKSPDSGHEVELVKEESYFFNISKYTDRLLEFYDQNPDFIQPPSRKNEMINNFIKPGLADLAVSRTSFNWGVHVPSNPKHVVYVWIDALVNYISALGYLSDDESLFNKYWPADIHLMAKEIVRFHSIIWPILLMALDLPLPKKVFAHGWILMKDGKMSKSKGNVVDPNILIDRYGLDATRYYLMRELPFGSDGVFTPEAFVERTNFDLANDLGNLVNRTISMVNKYFDGELPAYQGPLHELDEEMEAMALETVKSYTESMESLQFSVALSTVWKFISRTNKYIDETTPWVLAKDDSQKDMLGNVMAHLVENIRYAAVLLRPFLTHAPKEIFEQLNINNPQFMEFSSLEQYGVLNESIMVTGQPKPIFPRLDSEAEIAYIKESMQPPATKEEKEEIPSKPQIDIKDFDKVEIKAATIIDAEHVKKSDKLLKIQVDLDSEQRQIVSGIAKFYTPDDIIGKKVAVVTNLKPAKLMGQKSEGMILSAEKDGVLTLVSLPSAIPNGAVIK.

Positions 13–23 (YYPSGNLHIGH) match the 'HIGH' region motif. Positions 308–312 (KMSKS) match the 'KMSKS' region motif. Lysine 311 contacts ATP. The tRNA-binding domain maps to 557 to 657 (DFDKVEIKAA…SAIPNGAVIK (101 aa)).

This sequence belongs to the class-I aminoacyl-tRNA synthetase family. MetG type 2B subfamily. As to quaternary structure, homodimer.

The protein resides in the cytoplasm. It catalyses the reaction tRNA(Met) + L-methionine + ATP = L-methionyl-tRNA(Met) + AMP + diphosphate. In terms of biological role, is required not only for elongation of protein synthesis but also for the initiation of all mRNA translation through initiator tRNA(fMet) aminoacylation. This Staphylococcus aureus (strain COL) protein is Methionine--tRNA ligase.